A 350-amino-acid chain; its full sequence is Vancomycin C-type resistance protein VanC2 (350 aa).

Active-site residues include Glu-14 and Ser-187. In terms of domain architecture, ATP-grasp spans 141–343 (HQAAAAIGVQ…YQELLQKLLV (203 aa)). Residue 171 to 226 (IQTHGFPVFFKPNEAGSSKGITKVTCVEEIASALKEAFTYCSAVLLQKNIAGVEIG) participates in ATP binding. Residues Asp-297, Glu-310, and Asn-312 each coordinate Mg(2+). Mn(2+) is bound by residues Asp-297, Glu-310, and Asn-312. Ser-321 is a catalytic residue.

This sequence belongs to the D-alanine--D-alanine ligase family. As to quaternary structure, homodimer. The cofactor is Mg(2+). Mn(2+) serves as cofactor.

The protein resides in the cell membrane. The catalysed reaction is D-serine + D-alanine + ATP = D-alanyl-D-serine + ADP + phosphate + H(+). It functions in the pathway cell wall biogenesis; peptidoglycan biosynthesis. With respect to regulation, inhibited by D-cycloserine. Its function is as follows. Required for low-level resistance to the glycopeptide antibiotic vancomycin. D-alanine--D-alanine ligase of altered specificity, which catalyzes synthesis of D-Ala-D-Ser; produces a peptidoglycan which does not terminate in D-alanine but in D-serine, thus probably reducing affinity for vancomycin. Only insignificant catalytic synthesis of D-Ala-D-Ala in vitro. This chain is Vancomycin C-type resistance protein VanC2, found in Enterococcus casseliflavus (Enterococcus flavescens).